A 160-amino-acid chain; its full sequence is SsrA-binding protein (160 aa).

The segment covering 138–148 (KRDDIKDREWQ) has biased composition (basic and acidic residues). The interval 138–160 (KRDDIKDREWQTAKSRIMKHANR) is disordered.

This sequence belongs to the SmpB family.

The protein resides in the cytoplasm. Functionally, required for rescue of stalled ribosomes mediated by trans-translation. Binds to transfer-messenger RNA (tmRNA), required for stable association of tmRNA with ribosomes. tmRNA and SmpB together mimic tRNA shape, replacing the anticodon stem-loop with SmpB. tmRNA is encoded by the ssrA gene; the 2 termini fold to resemble tRNA(Ala) and it encodes a 'tag peptide', a short internal open reading frame. During trans-translation Ala-aminoacylated tmRNA acts like a tRNA, entering the A-site of stalled ribosomes, displacing the stalled mRNA. The ribosome then switches to translate the ORF on the tmRNA; the nascent peptide is terminated with the 'tag peptide' encoded by the tmRNA and targeted for degradation. The ribosome is freed to recommence translation, which seems to be the essential function of trans-translation. The polypeptide is SsrA-binding protein (Serratia proteamaculans (strain 568)).